The following is a 456-amino-acid chain: Cell cycle checkpoint control protein Rad9 (456 aa).

The Nuclear localization signal motif lies at 300–302 (KRK).

The protein belongs to the rad9 family. Component of the 9-1-1 checkpoint clamp complex consisting of Rad9 isoform A, Rad1 and Hus1-like; the interaction with Hus1-like is direct. Does not interact directly with Rad1; this interaction is probably mediated by Hus1-like. This complex probably also forms with Rad9 isoform B, however 9-1-1 complex containing Rad9 isoform A localizes to the nuclear periphery. Interacts with Brca2. As to expression, expressed in ovary.

The protein localises to the nucleus envelope. Its subcellular location is the nucleus. Component of the Rad9-Rad1-Hus1 (9-1-1) checkpoint clamp complex. Its function is as follows. Targets the 9-1-1 complex to the nuclear periphery. Targeting to the nuclear periphery is disrupted in the presence of persistent double stranded break DNA damage, possibly as a function of the meiotic checkpoint. This chain is Cell cycle checkpoint control protein Rad9, found in Drosophila melanogaster (Fruit fly).